Reading from the N-terminus, the 226-residue chain is Cytidylate kinase (226 aa).

10-18 (GPASSGKST) is a binding site for ATP.

Its subcellular location is the cytoplasm. The enzyme catalyses CMP + ATP = CDP + ADP. The catalysed reaction is dCMP + ATP = dCDP + ADP. This chain is Cytidylate kinase, found in Streptococcus pyogenes serotype M6 (strain ATCC BAA-946 / MGAS10394).